The sequence spans 333 residues: Phosphate acyltransferase (333 aa).

It belongs to the PlsX family. Homodimer. Probably interacts with PlsY.

It is found in the cytoplasm. It catalyses the reaction a fatty acyl-[ACP] + phosphate = an acyl phosphate + holo-[ACP]. It participates in lipid metabolism; phospholipid metabolism. Functionally, catalyzes the reversible formation of acyl-phosphate (acyl-PO(4)) from acyl-[acyl-carrier-protein] (acyl-ACP). This enzyme utilizes acyl-ACP as fatty acyl donor, but not acyl-CoA. The protein is Phosphate acyltransferase of Ligilactobacillus salivarius (strain UCC118) (Lactobacillus salivarius).